We begin with the raw amino-acid sequence, 88 residues long: Small ribosomal subunit protein uS15 (88 aa).

The protein belongs to the universal ribosomal protein uS15 family. In terms of assembly, part of the 30S ribosomal subunit. Forms a bridge to the 50S subunit in the 70S ribosome, contacting the 23S rRNA.

One of the primary rRNA binding proteins, it binds directly to 16S rRNA where it helps nucleate assembly of the platform of the 30S subunit by binding and bridging several RNA helices of the 16S rRNA. Functionally, forms an intersubunit bridge (bridge B4) with the 23S rRNA of the 50S subunit in the ribosome. In Mesomycoplasma hyopneumoniae (strain 232) (Mycoplasma hyopneumoniae), this protein is Small ribosomal subunit protein uS15.